Reading from the N-terminus, the 315-residue chain is Transaldolase (315 aa).

Residue lysine 131 is the Schiff-base intermediate with substrate of the active site.

The protein belongs to the transaldolase family. Type 1 subfamily. As to quaternary structure, homodimer.

It localises to the cytoplasm. The catalysed reaction is D-sedoheptulose 7-phosphate + D-glyceraldehyde 3-phosphate = D-erythrose 4-phosphate + beta-D-fructose 6-phosphate. It participates in carbohydrate degradation; pentose phosphate pathway; D-glyceraldehyde 3-phosphate and beta-D-fructose 6-phosphate from D-ribose 5-phosphate and D-xylulose 5-phosphate (non-oxidative stage): step 2/3. Functionally, transaldolase is important for the balance of metabolites in the pentose-phosphate pathway. The polypeptide is Transaldolase (Actinobacillus pleuropneumoniae serotype 7 (strain AP76)).